A 102-amino-acid polypeptide reads, in one-letter code: Thioredoxin (102 aa).

Positions 1 to 102 (MVQVVSQENF…SLIKLISKHQ (102 aa)) constitute a Thioredoxin domain. Cys28 and Cys31 are disulfide-bonded.

Belongs to the thioredoxin family.

Its function is as follows. Participates in various redox reactions through the reversible oxidation of its active center dithiol to a disulfide and catalyzes dithiol-disulfide exchange reactions. In Chlamydia trachomatis serovar D (strain ATCC VR-885 / DSM 19411 / UW-3/Cx), this protein is Thioredoxin (trxA).